Reading from the N-terminus, the 271-residue chain is Tryptophan synthase alpha chain (271 aa).

Catalysis depends on proton acceptor residues Glu56 and Asp67.

It belongs to the TrpA family. Tetramer of two alpha and two beta chains.

It carries out the reaction (1S,2R)-1-C-(indol-3-yl)glycerol 3-phosphate + L-serine = D-glyceraldehyde 3-phosphate + L-tryptophan + H2O. It functions in the pathway amino-acid biosynthesis; L-tryptophan biosynthesis; L-tryptophan from chorismate: step 5/5. Its function is as follows. The alpha subunit is responsible for the aldol cleavage of indoleglycerol phosphate to indole and glyceraldehyde 3-phosphate. The protein is Tryptophan synthase alpha chain of Mycobacterium avium (strain 104).